The primary structure comprises 139 residues: Holo-[acyl-carrier-protein] synthase (139 aa).

Mg(2+)-binding residues include D8 and E57.

Belongs to the P-Pant transferase superfamily. AcpS family. Requires Mg(2+) as cofactor.

It localises to the cytoplasm. It catalyses the reaction apo-[ACP] + CoA = holo-[ACP] + adenosine 3',5'-bisphosphate + H(+). Its function is as follows. Transfers the 4'-phosphopantetheine moiety from coenzyme A to a Ser of acyl-carrier-protein. The protein is Holo-[acyl-carrier-protein] synthase of Sinorhizobium fredii (strain NBRC 101917 / NGR234).